We begin with the raw amino-acid sequence, 358 residues long: Variant-surface-glycoprotein phospholipase C (358 aa).

The region spanning 25–198 (IGQVYMVGAH…STRRIFLVVR (174 aa)) is the PI-PLC X-box domain.

Monomer. The N-terminus is blocked.

The protein localises to the membrane. It catalyses the reaction a 6-(alpha-D-glucosaminyl)-1-(1,2-diacyl-sn-glycero-3-phospho)-1D-myo-inositol = 6-(alpha-D-glucosaminyl)-1D-myo-inositol 1,2-cyclic phosphate + a 1,2-diacyl-sn-glycerol. By hydrolysis of the attached glycolipid, releases soluble variant surface glycoprotein containing phosphoinositol from the cell wall of T.brucei after cell lysis. It also cleaves similar membrane anchors on some mammalian proteins. VSG lipase may play a role in processes such as parasite differentiation or antigenic variation. The polypeptide is Variant-surface-glycoprotein phospholipase C (Trypanosoma brucei brucei).